The chain runs to 65 residues: Large ribosomal subunit protein bL35 (65 aa).

Residues 1 to 22 form a disordered region; the sequence is MPKIKTVRGAAKRFKKTGSGGF. Positions 10–22 are enriched in basic residues; that stretch reads AAKRFKKTGSGGF.

It belongs to the bacterial ribosomal protein bL35 family.

This is Large ribosomal subunit protein bL35 from Serratia proteamaculans (strain 568).